The chain runs to 115 residues: NADH-ubiquinone oxidoreductase chain 3 (115 aa).

3 consecutive transmembrane segments (helical) span residues 3 to 23, 55 to 75, and 84 to 104; these read FVLALTINTLLALLLMILTFW, FFLVAITFLLFDLEIALLLPL, and LPLMTTSSLMLIIILALGLTY.

It belongs to the complex I subunit 3 family. In terms of assembly, core subunit of respiratory chain NADH dehydrogenase (Complex I) which is composed of 45 different subunits. Interacts with TMEM186. Interacts with TMEM242.

Its subcellular location is the mitochondrion inner membrane. It carries out the reaction a ubiquinone + NADH + 5 H(+)(in) = a ubiquinol + NAD(+) + 4 H(+)(out). Functionally, core subunit of the mitochondrial membrane respiratory chain NADH dehydrogenase (Complex I) which catalyzes electron transfer from NADH through the respiratory chain, using ubiquinone as an electron acceptor. Essential for the catalytic activity of complex I. The sequence is that of NADH-ubiquinone oxidoreductase chain 3 from Pongo pygmaeus (Bornean orangutan).